The primary structure comprises 493 residues: Glutamyl-tRNA(Gln) amidotransferase subunit A (493 aa).

Residues Lys-79 and Ser-159 each act as charge relay system in the active site. Ser-183 acts as the Acyl-ester intermediate in catalysis.

Belongs to the amidase family. GatA subfamily. In terms of assembly, heterotrimer of A, B and C subunits.

It carries out the reaction L-glutamyl-tRNA(Gln) + L-glutamine + ATP + H2O = L-glutaminyl-tRNA(Gln) + L-glutamate + ADP + phosphate + H(+). Functionally, allows the formation of correctly charged Gln-tRNA(Gln) through the transamidation of misacylated Glu-tRNA(Gln) in organisms which lack glutaminyl-tRNA synthetase. The reaction takes place in the presence of glutamine and ATP through an activated gamma-phospho-Glu-tRNA(Gln). In Sinorhizobium fredii (strain NBRC 101917 / NGR234), this protein is Glutamyl-tRNA(Gln) amidotransferase subunit A.